A 195-amino-acid chain; its full sequence is Small ribosomal subunit protein uS4 (195 aa).

The S4 RNA-binding domain maps to 92–152; sequence SRLDNIVYRL…EKHKHKANKN (61 aa).

The protein belongs to the universal ribosomal protein uS4 family. In terms of assembly, part of the 30S ribosomal subunit. Contacts protein S5. The interaction surface between S4 and S5 is involved in control of translational fidelity.

Its function is as follows. One of the primary rRNA binding proteins, it binds directly to 16S rRNA where it nucleates assembly of the body of the 30S subunit. Functionally, with S5 and S12 plays an important role in translational accuracy. The sequence is that of Small ribosomal subunit protein uS4 from Karelsulcia muelleri (strain GWSS) (Sulcia muelleri).